The following is a 185-amino-acid chain: Elongation factor P (185 aa).

It belongs to the elongation factor P family.

It localises to the cytoplasm. Its pathway is protein biosynthesis; polypeptide chain elongation. Functionally, involved in peptide bond synthesis. Stimulates efficient translation and peptide-bond synthesis on native or reconstituted 70S ribosomes in vitro. Probably functions indirectly by altering the affinity of the ribosome for aminoacyl-tRNA, thus increasing their reactivity as acceptors for peptidyl transferase. This Thermoanaerobacter sp. (strain X514) protein is Elongation factor P.